Consider the following 351-residue polypeptide: MIEKLEELRAQWRKLQQEVENPSLFSSTQSYRERMRDHAYLSRLMEEYDRYLLTEKQLEDAHVLIQDESDADFKDVIRQEIRTLEAALHTSQKRLKTLLIPPDPLQEKNIIMEIRGGTGGDEAALFAADLFRMYTHYAESKQWRYEVLAVSETELGGFKEITFSISGRDVYGSLRYESGVHRVQRVPSTEASGRIHTSAVTVAVLPEMEETEVDIRAEDVRVDVMRASGPGGQCVNTTDSAVRLTHLPTGIVVVCQDEKSQIKNKAKAMRVLRSRVYDLEESKRQVARARERKSQVGSGDRSERIRTYNFPQNRVTDHRVRVTLYKLDAVMQGALDDIIEPLCIASRESVI.

Position 233 is an N5-methylglutamine (Gln-233).

The protein belongs to the prokaryotic/mitochondrial release factor family. In terms of processing, methylated by PrmC. Methylation increases the termination efficiency of RF1.

It is found in the cytoplasm. Peptide chain release factor 1 directs the termination of translation in response to the peptide chain termination codons UAG and UAA. This is Peptide chain release factor 1 from Treponema pallidum subsp. pallidum (strain SS14).